Here is a 250-residue protein sequence, read N- to C-terminus: AA9 family lytic polysaccharide monooxygenase F (250 aa).

The first 18 residues, 1 to 18, serve as a signal peptide directing secretion; that stretch reads MHLKTFSNLLVFVATVAA. H19 is a binding site for Cu(2+). N24 and N85 each carry an N-linked (GlcNAc...) asparagine glycan. Intrachain disulfides connect C70-C199 and C169-C250. H108 contributes to the Cu(2+) binding site. An N-linked (GlcNAc...) asparagine glycan is attached at N146. The O2 site is built by H185 and Q194. Y196 contributes to the Cu(2+) binding site.

The protein belongs to the polysaccharide monooxygenase AA9 family. Cu(2+) serves as cofactor.

Its subcellular location is the secreted. The enzyme catalyses [(1-&gt;4)-beta-D-glucosyl]n+m + reduced acceptor + O2 = 4-dehydro-beta-D-glucosyl-[(1-&gt;4)-beta-D-glucosyl]n-1 + [(1-&gt;4)-beta-D-glucosyl]m + acceptor + H2O.. In terms of biological role, lytic polysaccharide monooxygenase (LPMO) that depolymerizes crystalline and amorphous polysaccharides via the oxidation of scissile alpha- or beta-(1-4)-glycosidic bonds, yielding C1 and C4 oxidation products. Catalysis by LPMOs requires the reduction of the active-site copper from Cu(II) to Cu(I) by a reducing agent and H(2)O(2) or O(2) as a cosubstrate. This Botryotinia fuckeliana (strain B05.10) (Noble rot fungus) protein is AA9 family lytic polysaccharide monooxygenase F.